The chain runs to 293 residues: DegV domain-containing protein MG326 homolog (293 aa).

One can recognise a DegV domain in the interval 3 to 289 (TAIITDSTAS…IDAFSISLLL (287 aa)). 2 residues coordinate hexadecanoate: Thr-62 and Ser-94.

Functionally, may bind long-chain fatty acids, such as palmitate, and may play a role in lipid transport or fatty acid metabolism. The sequence is that of DegV domain-containing protein MG326 homolog from Mycoplasma pneumoniae (strain ATCC 29342 / M129 / Subtype 1) (Mycoplasmoides pneumoniae).